Here is an 88-residue protein sequence, read N- to C-terminus: Acylphosphatase (88 aa).

An Acylphosphatase-like domain is found at 3 to 88 (AARFVVSGVV…VPPTEDFVTG (86 aa)). Catalysis depends on residues R18 and N36.

This sequence belongs to the acylphosphatase family.

The enzyme catalyses an acyl phosphate + H2O = a carboxylate + phosphate + H(+). This chain is Acylphosphatase (acyP), found in Xanthomonas oryzae pv. oryzae (strain MAFF 311018).